We begin with the raw amino-acid sequence, 314 residues long: tRNA dimethylallyltransferase (314 aa).

36–43 (GPTASGKT) contributes to the ATP binding site. Substrate is bound at residue 38–43 (TASGKT). The tract at residues 61–64 (DSVQ) is interaction with substrate tRNA.

The protein belongs to the IPP transferase family. In terms of assembly, monomer. Requires Mg(2+) as cofactor.

It catalyses the reaction adenosine(37) in tRNA + dimethylallyl diphosphate = N(6)-dimethylallyladenosine(37) in tRNA + diphosphate. Catalyzes the transfer of a dimethylallyl group onto the adenine at position 37 in tRNAs that read codons beginning with uridine, leading to the formation of N6-(dimethylallyl)adenosine (i(6)A). The protein is tRNA dimethylallyltransferase of Sorangium cellulosum (strain So ce56) (Polyangium cellulosum (strain So ce56)).